The sequence spans 862 residues: Protein PRQFV-amide (862 aa).

Positions M1–S20 are cleaved as a signal peptide. Residues F21–Q79 constitute a propeptide that is removed on maturation. A disordered region spans residues N32–D68. The span at K43–G53 shows a compositional bias: basic and acidic residues. Position 86 is a valine amide (V86). Residues A90 to Y149 constitute a propeptide that is removed on maturation. Residue V156 is modified to Valine amide. Positions G160–E175 are excised as a propeptide. 9 positions are modified to valine amide: V182, V190, V198, V206, V214, V222, V230, V238, and V246. A propeptide spanning residues E250 to D259 is cleaved from the precursor. Position 266 is a valine amide (V266). Residues S270 to S300 constitute a propeptide that is removed on maturation. V307 is modified (valine amide). Positions D311–S319 are excised as a propeptide. V326 is modified (valine amide). Residues D330 to S338 constitute a propeptide that is removed on maturation. V345 is subject to Valine amide. The propeptide occupies D349–S357. Valine amide is present on V364. The propeptide occupies E368–S376. At V383 the chain carries Valine amide. Positions E387 to S395 are excised as a propeptide. At V402 the chain carries Valine amide. A propeptide spanning residues E406–S414 is cleaved from the precursor. Position 421 is a valine amide (V421). The span at R424–K434 shows a compositional bias: basic and acidic residues. The disordered stretch occupies residues R424 to R528. The propeptide occupies E425–S433. V440 carries the valine amide modification. Residues G441–K452 show a composition bias toward basic and acidic residues. The propeptide occupies E444–S451. Position 458 is a valine amide (V458). Positions G459 to K471 are enriched in basic and acidic residues. A propeptide spanning residues E462–S470 is cleaved from the precursor. V477 is modified (valine amide). Basic and acidic residues predominate over residues G478–K490. A propeptide spanning residues E481–S489 is cleaved from the precursor. V496 is subject to Valine amide. Positions G497–K508 are enriched in basic and acidic residues. Positions E500–S507 are excised as a propeptide. Residue V514 is modified to Valine amide. Residues G515 to K527 show a composition bias toward basic and acidic residues. A propeptide spanning residues E518–S526 is cleaved from the precursor. V533 carries the valine amide modification. Positions E537–S545 are excised as a propeptide. The disordered stretch occupies residues R549–D634. V552 carries the valine amide modification. Basic and acidic residues predominate over residues G553–K565. Positions E556–S564 are excised as a propeptide. V571 is subject to Valine amide. The span at G572–K584 shows a compositional bias: basic and acidic residues. The propeptide occupies E575 to S583. The residue at position 590 (V590) is a Valine amide. Positions E594–S602 are excised as a propeptide. At V609 the chain carries Valine amide. The span at G610 to K622 shows a compositional bias: basic and acidic residues. Positions E613 to S621 are excised as a propeptide. Position 628 is a valine amide (V628). A propeptide spanning residues E632–S640 is cleaved from the precursor. V647 is subject to Valine amide. A propeptide spanning residues E651–S659 is cleaved from the precursor. Valine amide is present on V666. Positions D670 to S677 are excised as a propeptide. V684 carries the valine amide modification. Positions E688–A695 are excised as a propeptide. A Valine amide modification is found at V702. Positions G706–S714 are excised as a propeptide. At V721 the chain carries Valine amide. Residues R724–A757 constitute a propeptide that is removed on maturation. Valine amide is present on V764. Positions S768–Q812 are excised as a propeptide. The residue at position 819 (V819) is a Valine amide. The propeptide occupies G823–S862.

In terms of tissue distribution, expressed abundantly in the abdominal ganglion, much less in the pedal and cerebral ganglia, and rarely in the buccal and pleural ganglia.

The protein resides in the secreted. PRQFV-amide may act as a modulator within the feeding system as well as in other systems of Aplysia. This is Protein PRQFV-amide from Aplysia californica (California sea hare).